Here is a 101-residue protein sequence, read N- to C-terminus: NAD(P)H-quinone oxidoreductase subunit 4L, chloroplastic (101 aa).

3 helical membrane passes run 2-22, 32-52, and 61-81; these read IFQS…YGLL, MSLE…SNFV, and VLAL…LAII.

The protein belongs to the complex I subunit 4L family. As to quaternary structure, NDH is composed of at least 16 different subunits, 5 of which are encoded in the nucleus.

Its subcellular location is the plastid. It is found in the chloroplast thylakoid membrane. The catalysed reaction is a plastoquinone + NADH + (n+1) H(+)(in) = a plastoquinol + NAD(+) + n H(+)(out). It catalyses the reaction a plastoquinone + NADPH + (n+1) H(+)(in) = a plastoquinol + NADP(+) + n H(+)(out). NDH shuttles electrons from NAD(P)H:plastoquinone, via FMN and iron-sulfur (Fe-S) centers, to quinones in the photosynthetic chain and possibly in a chloroplast respiratory chain. The immediate electron acceptor for the enzyme in this species is believed to be plastoquinone. Couples the redox reaction to proton translocation, and thus conserves the redox energy in a proton gradient. The chain is NAD(P)H-quinone oxidoreductase subunit 4L, chloroplastic from Nephroselmis olivacea (Green alga).